Consider the following 423-residue polypeptide: F-box protein At1g52495 (423 aa).

The region spanning 49–95 (KLKDVHLPLDLIVEILKKLPTKSLMRFRCVSKPWSFIISKRRDFVES) is the F-box domain.

In Arabidopsis thaliana (Mouse-ear cress), this protein is F-box protein At1g52495.